A 221-amino-acid polypeptide reads, in one-letter code: Esterase C25G4.2 (221 aa).

Residues Ser106, Asp166, and His194 each act as charge relay system in the active site.

This sequence belongs to the LovG family.

The chain is Esterase C25G4.2 from Caenorhabditis elegans.